A 216-amino-acid chain; its full sequence is Protein-L-isoaspartate O-methyltransferase (216 aa).

Residue Ser-63 is part of the active site.

Belongs to the methyltransferase superfamily. L-isoaspartyl/D-aspartyl protein methyltransferase family.

It localises to the cytoplasm. The catalysed reaction is [protein]-L-isoaspartate + S-adenosyl-L-methionine = [protein]-L-isoaspartate alpha-methyl ester + S-adenosyl-L-homocysteine. Functionally, catalyzes the methyl esterification of L-isoaspartyl residues in peptides and proteins that result from spontaneous decomposition of normal L-aspartyl and L-asparaginyl residues. It plays a role in the repair and/or degradation of damaged proteins. This chain is Protein-L-isoaspartate O-methyltransferase, found in Rhodopseudomonas palustris (strain BisB18).